Here is a 110-residue protein sequence, read N- to C-terminus: Nucleotide-binding protein HI1146 homolog (110 aa).

This sequence belongs to the RapZ-like family.

Its function is as follows. Displays ATPase and GTPase activities. The protein is Nucleotide-binding protein HI1146 homolog of Aggregatibacter actinomycetemcomitans (Actinobacillus actinomycetemcomitans).